The sequence spans 139 residues: MFKEFKAFAMRGNVVDMAVGIIIGAAFGAIVKSLVDDVIMPPIGLLLGNVDFSNLFIVLKDGAEVAPPYASVAAAQAAGAVTLNYGLFINAVVSFTIVAFAVFLLIRAINKLKAEEPAAPEVTPEDIVLLREIRDALKK.

Helical transmembrane passes span 14-34 and 86-106; these read VVDM…VKSL and GLFI…FLLI.

The protein belongs to the MscL family. In terms of assembly, homopentamer.

It localises to the cell inner membrane. Channel that opens in response to stretch forces in the membrane lipid bilayer. May participate in the regulation of osmotic pressure changes within the cell. This Methylobacillus flagellatus (strain ATCC 51484 / DSM 6875 / VKM B-1610 / KT) protein is Large-conductance mechanosensitive channel.